We begin with the raw amino-acid sequence, 202 residues long: Superoxide dismutase [Cu-Zn], chloroplastic (202 aa).

The transit peptide at 1 to 48 (MASQTLVSPSPLSSHSLLRTSFSGVSVKLAPQFSTLATSNFKPLTVVA) directs the protein to the chloroplast. Cu cation is bound by residues H94, H96, and H111. Cysteines 105 and 194 form a disulfide. Zn(2+) contacts are provided by H111, H119, H128, and D131. Residue H168 participates in Cu cation binding.

Belongs to the Cu-Zn superoxide dismutase family. As to quaternary structure, homotetramer. The cofactor is Cu cation. Requires Zn(2+) as cofactor.

The protein resides in the plastid. It is found in the chloroplast. The enzyme catalyses 2 superoxide + 2 H(+) = H2O2 + O2. Destroys radicals which are normally produced within the cells and which are toxic to biological systems. In Pisum sativum (Garden pea), this protein is Superoxide dismutase [Cu-Zn], chloroplastic (SODCP).